A 123-amino-acid polypeptide reads, in one-letter code: Double-stranded DNA deaminase immunity protein (123 aa).

As to quaternary structure, the toxic domain forms a 1:1 complex with the DddI immunity protein. This protein blocks the active site of the toxin.

Its function is as follows. Immunity protein component of a toxin-immunity protein module, which functions as a cellular contact-dependent growth inhibition (CDI) system. CDI modules allow bacteria to communicate with and inhibit the growth of closely related neighboring bacteria in a contact-dependent fashion. Bacteria that have this module inhibit or kill bacteria without it, giving them a growth advantage. Specifically inhibits the toxic activity of cognate toxin DddA (C-terminal 163 residue fragment) upon expression in E.coli. The protein is Double-stranded DNA deaminase immunity protein of Burkholderia cenocepacia (strain H111).